Here is a 156-residue protein sequence, read N- to C-terminus: Small ribosomal subunit protein uS7 (156 aa).

Belongs to the universal ribosomal protein uS7 family. In terms of assembly, part of the 30S ribosomal subunit. Contacts proteins S9 and S11.

Its function is as follows. One of the primary rRNA binding proteins, it binds directly to 16S rRNA where it nucleates assembly of the head domain of the 30S subunit. Is located at the subunit interface close to the decoding center, probably blocks exit of the E-site tRNA. This Arthrospira platensis (Spirulina platensis) protein is Small ribosomal subunit protein uS7.